A 250-amino-acid polypeptide reads, in one-letter code: MDTAMQLKTSIGLITCRMNTQNNQIETILVQKRYSLAFSEFIHCHYSINANQGHLIKMFNNMTINERLLVKTLDFDRMWYHIWIETPVYELYHKKYQKFRKNWLLPDNGKKLISLINQAKGSGTLLWEIPKGKPKEDESDLTCAIREFEEETGITREYYQILPEFKKSMSYFDGKTEYKHIYFLAMLCKSLEEPNMNLSLQYENRIAEISKISWQNMEAVRFISKRQSLNLEPIIGPAFNFIKNYLRYKH.

The Nudix hydrolase domain occupies 97–243 (QKFRKNWLLP…IIGPAFNFIK (147 aa)). Residues 132 to 153 (GKPKEDESDLTCAIREFEEETG) carry the Nudix box motif. Residue Glu-138 coordinates Mg(2+). Glu-147 (nucleophile) is an active-site residue. Positions 151 and 173 each coordinate Mg(2+).

Belongs to the Nudix hydrolase family. DIPP subfamily. In terms of assembly, interacts with host RPL23A. The cofactor is Mg(2+). It depends on Mn(2+) as a cofactor.

The protein resides in the host rough endoplasmic reticulum. It carries out the reaction diphospho-myo-inositol polyphosphate + H2O = myo-inositol polyphosphate + phosphate.. Its function is as follows. Decapping enzyme required for the removal of the 5'-end m7GpppN cap tethered to viral and host mRNAs to allow their decay in cells. May therefore accelerate viral and cellular mRNA turnover to eliminate competing host mRNAs and allow stage-specific synthesis of viral proteins. Acceleration of the turnover of cellular transcripts may even promote the shutoff of host protein synthesis. In addition to the mRNA cap, g5R also efficiently hydrolyzes diphosphoinositol polyphosphates. Down-regulation of the level of PP-InsP5 (diphosphoinositol pentakisphosphate) may play a role in viral manipulation of the cellular secretory pathway, a step necessary for the formation of virions. Binds viral and cellular poly(A) mRNAs, thereby decreasing both types of mRNAs. The sequence is that of mRNA-decapping protein g5R from African swine fever virus (isolate Tick/South Africa/Pretoriuskop Pr4/1996) (ASFV).